The chain runs to 64 residues: Endodeoxyribonuclease toxin RalR (64 aa).

It depends on Ca(2+) as a cofactor. Mg(2+) is required as a cofactor.

Inhibited by EDTA. In terms of biological role, toxic component of a type I toxin-antitoxin (TA) system. Upon overexpression inhibits growth and reduces colony-forming units in both the presence and absence of the Rac prophage, cells become filamentous. Has deoxyribonuclease activity (probably endonucleolytic), does not digest RNA. Its toxic effects are neutralized by sRNA antitoxin RalA, which is encoded in trans on the opposite DNA strand. Has RAL-like activity. This is Endodeoxyribonuclease toxin RalR (ralR) from Escherichia coli (strain K12).